Reading from the N-terminus, the 506-residue chain is ATP synthase subunit alpha (506 aa).

172–179 (GDRKTGKT) contributes to the ATP binding site.

It belongs to the ATPase alpha/beta chains family. As to quaternary structure, F-type ATPases have 2 components, CF(1) - the catalytic core - and CF(0) - the membrane proton channel. CF(1) has five subunits: alpha(3), beta(3), gamma(1), delta(1), epsilon(1). CF(0) has three main subunits: a(1), b(2) and c(9-12). The alpha and beta chains form an alternating ring which encloses part of the gamma chain. CF(1) is attached to CF(0) by a central stalk formed by the gamma and epsilon chains, while a peripheral stalk is formed by the delta and b chains.

The protein localises to the cell membrane. The enzyme catalyses ATP + H2O + 4 H(+)(in) = ADP + phosphate + 5 H(+)(out). Its function is as follows. Produces ATP from ADP in the presence of a proton gradient across the membrane. The alpha chain is a regulatory subunit. The sequence is that of ATP synthase subunit alpha from Lactobacillus gasseri (strain ATCC 33323 / DSM 20243 / BCRC 14619 / CIP 102991 / JCM 1131 / KCTC 3163 / NCIMB 11718 / NCTC 13722 / AM63).